We begin with the raw amino-acid sequence, 944 residues long: MSAGSRALEAVIRMRDEASRTLRQVRDATRALQNQTNSTSQAQERLQEQFRKVSNAAKIAGAGIVTGIGAGLVSASKAGAEFETAMTKTSTMFGDTKVDTENLNNKVLELSKNTGIAASSIGESLYNALSSGIPVTKDMGSAMDFMTKNAKLSKAGFTDIDTALTATAKVLNAYKMDVSETDRVHKVMMQTQNKGITTVGELGATLAQVTPTASAMSFSFEQVGASLANMTAQGTPTAQATTQLNSLLAELGKTGTVANKSLLSATKGTKYAGKSFKELMQAGVPLNEILNLMDGSAKKNKKSLIDMFGSIEAGKAALALSGQNSEQYTNNLKAMSTQADVVSSAYAKMSNTLESKVGILKESFKNLGIEIYSKLKEPLKNAAETGIQCLSDLDKQFSSGSLKAGISQIAQSFGDLTSTIIKVATKALPTMIKSLSWVLKNGPTIASVLVSIKVASIMTSAVKSIVALKKAWIAAKLAVRVYMVGMAEAGTVLSGFQILVGVLTKNMTIAQARTMLLAKASALLGGPIGIAIVAITALVAGLVVLWNTNKGFRDFVINAWNNIKETTTKVWGGICNFFTQTIPQAWNDLCTSFSNAVQWFGEMWNNIKQAFINGWNAIVAFFTQTIPTWINNIGVWFGQLPAKIGYGLGFALGKIISWGISVWTYLVTNVPIWINNVVTFFAQLPNKIWVWLVSTVQKIGQWGIAMLTSAQIYTSMIINNIVTFFTTLPGRIWTWLTNTVQKVVTWGSQMATKGKEGAKKLINTVVDTLKSLPKKVMDIGKNIVKGLWNGITGAGGWLKGKVNDFAKGVIDGFKNGFGVHSPSWKLRDLVGRFLPLGIWERYKSRIAKFEEYIDNVVSNLTQRMYKPQEIEESDYTRKYKEAIAQRTEQNTINKTDSKTTNNKEDNNITININLGGVTVKEEADINKLTKMLVREIKLGIAGGV.

Positions 13-52 (RMRDEASRTLRQVRDATRALQNQTNSTSQAQERLQEQFRK) form a coiled coil.

Belongs to the P2likevirus tape measure protein family.

Its function is as follows. Serves as a base for tail tube protein polymerization and acts as a template for tail length determination. The polypeptide is Probable tape measure protein (Clostridioides difficile (Peptoclostridium difficile)).